We begin with the raw amino-acid sequence, 218 residues long: Redox-sensing transcriptional repressor Rex (218 aa).

The segment at residues 18 to 57 (LYYRFIQSLHASGKQRVSSAELSEAVKVDSATIRRDFSYF) is a DNA-binding region (H-T-H motif). NAD(+) is bound at residue 92–97 (GVGHLG).

Belongs to the transcriptional regulatory Rex family. In terms of assembly, homodimer.

It localises to the cytoplasm. Functionally, modulates transcription in response to changes in cellular NADH/NAD(+) redox state. This chain is Redox-sensing transcriptional repressor Rex, found in Exiguobacterium sp. (strain ATCC BAA-1283 / AT1b).